The primary structure comprises 2220 residues: Calcineurin-binding protein cabin-1 (2220 aa).

2 positions are modified to phosphoserine: Ser-10 and Ser-11. Thr-12 carries the phosphothreonine modification. Phosphoserine occurs at positions 20 and 66. 3 TPR repeats span residues 36–69, 90–123, and 125–157; these read AFAL…SLLR, YSTY…DSTD, and NLWY…NPDH. The segment at 361–400 is disordered; it reads GAPVGDISGGDKSKKGVKRKKISEESGETAKRRSARVRNT. A compositionally biased stretch (basic and acidic residues) spans 382–391; it reads ISEESGETAK. Phosphoserine is present on residues Ser-433 and Ser-450. One copy of the TPR 4 repeat lies at 615–648; the sequence is VRVYWLKARFLALQGDMEQALENYDICTEMLQSS. Phosphoserine is present on Ser-673. TPR repeat units lie at residues 1055–1088 and 1106–1139; these read NELY…CPNR and KLNS…DSSN. Disordered regions lie at residues 1299 to 1476, 1668 to 1845, 1916 to 2165, and 2197 to 2220; these read FARG…STPT, AEGS…RLSR, AQRQ…GSIS, and VLET…YMDI. Positions 1301–1324 are enriched in basic and acidic residues; sequence RGEEKNTPKASEKEKACLVDEDSH. The segment covering 1327-1349 has biased composition (low complexity); the sequence is AGTLPGPGASLPSSSGPGLTSPP. A compositionally biased stretch (polar residues) spans 1377–1397; the sequence is DSTAVALSDSSSTQDFFNEPT. Basic and acidic residues predominate over residues 1402–1412; that stretch reads GSRKSYTEKRL. Ser-1439 is modified (phosphoserine). Over residues 1715-1725 the composition is skewed to gly residues; that stretch reads SGPGPEPGGKV. Basic and acidic residues-rich tracts occupy residues 1744–1753 and 1784–1794; these read SGERKDKESP and PARDRGPESRP. Over residues 1812 to 1823 the composition is skewed to pro residues; that stretch reads PLTPAQPAPAPA. 2 stretches are compositionally biased toward polar residues: residues 1918–1927 and 1975–1989; these read RQASGDTPTT and TIIT…STLD. The residue at position 1924 (Thr-1924) is a Phosphothreonine. A compositionally biased stretch (basic and acidic residues) spans 2070 to 2081; that stretch reads GKLRPEPRRDGE. The segment covering 2091–2112 has biased composition (low complexity); sequence PLSSPPTAASSKAPSSGSAQPP. The residue at position 2094 (Ser-2094) is a Phosphoserine. Residues 2116 to 2153 are required for interaction with calcineurin; it reads PGKPEPSRAKSRPLPNMPKLVIPSAATKFPPEITVTPP. 2 positions are modified to phosphothreonine: Thr-2151 and Thr-2154. Residues 2207–2220 show a composition bias toward acidic residues; the sequence is LESETDEDDDYMDI.

In terms of assembly, component of a complex that includes at least ASF1A, CABIN1, HIRA, histone H3.3 and UBN1. Interacts with calcineurin. Interacts with MEF2B. Post-translationally, activated through PKC-mediated hyperphosphorylation. Phosphorylation by the DNA damage kinases ATM and CHK2 enhances ubiquitination. Upon genotoxic stress, ubiquitination by the DCX(DDB2) E3 ubiquitin-protein ligase complex targets CABIN1 for proteasomal degradation, leading to the release of p53/TP53. Widely expressed in different tissues.

It is found in the nucleus. Its function is as follows. May be required for replication-independent chromatin assembly. May serve as a negative regulator of T-cell receptor (TCR) signaling via inhibition of calcineurin. Inhibition of activated calcineurin is dependent on both PKC and calcium signals. Acts as a negative regulator of p53/TP53 by keeping p53 in an inactive state on chromatin at promoters of a subset of it's target genes. This is Calcineurin-binding protein cabin-1 (CABIN1) from Homo sapiens (Human).